Reading from the N-terminus, the 236-residue chain is Purine nucleoside phosphorylase DeoD-type (236 aa).

H5 provides a ligand contact to a purine D-ribonucleoside. Phosphate-binding positions include G21, R25, R44, and 88 to 91 (RVGT). A purine D-ribonucleoside is bound by residues 180-182 (EME) and 204-205 (SD). D205 (proton donor) is an active-site residue.

Belongs to the PNP/UDP phosphorylase family. As to quaternary structure, homohexamer; trimer of homodimers.

The catalysed reaction is a purine D-ribonucleoside + phosphate = a purine nucleobase + alpha-D-ribose 1-phosphate. The enzyme catalyses a purine 2'-deoxy-D-ribonucleoside + phosphate = a purine nucleobase + 2-deoxy-alpha-D-ribose 1-phosphate. In terms of biological role, catalyzes the reversible phosphorolytic breakdown of the N-glycosidic bond in the beta-(deoxy)ribonucleoside molecules, with the formation of the corresponding free purine bases and pentose-1-phosphate. This is Purine nucleoside phosphorylase DeoD-type from Shewanella loihica (strain ATCC BAA-1088 / PV-4).